A 246-amino-acid chain; its full sequence is MAVTMRQMLEAGVHFGHQTRFWNPKMAPFIFGHRNKIHIINLEKTLPMFTDAQKYVRQLAANRGTILFVGTKRQSRDTIAQEAQRAGMPYVNARWLGGMMTNFKTLKVSIKRLKDMEAAVEAGELEKMSKKEALLFEREIAKLQKSIGGVKDMGGIPDAIFVVDVGYHKIAVTEANKLGVPVIAVVDTNHSPEGVDYVIPGNDDSSKAVALYAEGVADAILEGRANAVNEVVQAARGDDEYVEENA.

This sequence belongs to the universal ribosomal protein uS2 family.

The polypeptide is Small ribosomal subunit protein uS2 (Burkholderia cenocepacia (strain ATCC BAA-245 / DSM 16553 / LMG 16656 / NCTC 13227 / J2315 / CF5610) (Burkholderia cepacia (strain J2315))).